We begin with the raw amino-acid sequence, 165 residues long: Protein SprT (165 aa).

Residues 10 to 158 enclose the SprT-like domain; it reads EACYRQAEHF…CRRCKATLVF (149 aa). Residue His69 coordinates Zn(2+). Glu70 is a catalytic residue. His73 contributes to the Zn(2+) binding site.

The protein belongs to the SprT family. Requires Zn(2+) as cofactor.

The protein resides in the cytoplasm. The polypeptide is Protein SprT (Pseudomonas aeruginosa (strain UCBPP-PA14)).